A 402-amino-acid chain; its full sequence is MANAYGFVGHSVPTMKRAAQFQQMGSGFCSADSISKRVFCCSVVQGADKPASGDSRTEYRTPRLVSRGCKLVGSGSAMPALQVSNDDLSKIVDTNDEWISVRTGIRNRRVLTGKESLTNLATVAARKALEMAQVDANDVDMVLMCTSTPEDLFGSAPQIQKALGCKKNPLAYDITAACSGFVLGLVSAACHIRGGGFNNILVIGADSLSRYVDWTDRGTCILFGDAAGAVLVQSCDAEEDGLFAFDLHSDGDGQRHLKAAITENGIDHAVGSNGSVSDFPPRSSSYSCIQMNGKEVFRFACRCVPQSIESALGKAGLNGSNIDWLLLHQANQRIIDAVATRLEVPQERVISNLANYGNTSAASIPLALDEAVRGGKVKAGHLIATAGFGAGLTWGSAIVRWG.

Residues Cys178, His328, and Asn358 contribute to the active site.

This sequence belongs to the thiolase-like superfamily. FabH family.

The protein resides in the plastid. It localises to the chloroplast. It carries out the reaction malonyl-[ACP] + acetyl-CoA + H(+) = 3-oxobutanoyl-[ACP] + CO2 + CoA. It participates in lipid metabolism; fatty acid biosynthesis. Functionally, catalyzes the condensation reaction of fatty acid synthesis by the addition to an acyl acceptor of two carbons from malonyl-ACP. KAS III catalyzes the first condensation reaction which initiates fatty acid synthesis and may therefore play a role in governing the total rate of fatty acid production. Possesses both acetoacetyl-ACP synthase and acetyl transacylase activities. This is Beta-ketoacyl-[acyl-carrier-protein] synthase III B, chloroplastic (KAS3B) from Cuphea wrightii (Wright's waxweed).